Consider the following 180-residue polypeptide: Fetal and adult testis-expressed transcript protein homolog (180 aa).

Positions 77-108 are disordered; that stretch reads GPQLRGVGVVGEQGDGGAQPQENPGGSQGMRS. The segment covering 84-93 has biased composition (gly residues); sequence GVVGEQGDGG. Over residues 96 to 107 the composition is skewed to polar residues; sequence PQENPGGSQGMR. Residues 160–178 form a helical membrane-spanning segment; the sequence is VLLFTMLLSSCITNLWLWM.

Interacts with BIK and RNF183. Interacts with IMMT/MIC60and EMD.

It is found in the mitochondrion. Its subcellular location is the mitochondrion outer membrane. It localises to the endoplasmic reticulum membrane. Functionally, involved in the regulation of endoplasmic reticulum (ER)-mitochondria coupling. Negatively regulates the ER-mitochondria distance and Ca(2+) transfer from ER to mitochondria possibly implicating it in the regulation of apoptosis. May collaborate with RNF183 to restrain BIK protein levels thus regulating apoptotic signaling. This chain is Fetal and adult testis-expressed transcript protein homolog (FATE1), found in Bos taurus (Bovine).